We begin with the raw amino-acid sequence, 608 residues long: Isoprene synthase, chloroplastic (608 aa).

A chloroplast-targeting transit peptide spans 1–45 (MATNLLCLSNKLSSPTPTPSTRFPQSKNFITQKTSLANPKPWRVI). Asp-350 is a binding site for dimethylallyl diphosphate. Mg(2+) is bound by residues Asp-350 and Asp-354. The DDXXD motif motif lies at 350 to 354 (DDVYD). Dimethylallyl diphosphate-binding residues include Glu-428, Arg-494, and Asn-497. 3 residues coordinate Mg(2+): Asn-497, Thr-501, and Glu-505.

This sequence belongs to the terpene synthase family. Tpsb subfamily. Requires Mg(2+) as cofactor. It depends on Mn(2+) as a cofactor.

The protein localises to the plastid. It is found in the chloroplast. It carries out the reaction dimethylallyl diphosphate = isoprene + diphosphate. Its function is as follows. Lyase that catalyzes the formation of isoprene from dimethylallyl diphosphate. In Pueraria montana var. lobata (Kudzu vine), this protein is Isoprene synthase, chloroplastic (ISPS).